The primary structure comprises 494 residues: Glycerol kinase (494 aa).

T12 serves as a coordination point for ADP. The ATP site is built by T12, T13, and S14. T12 is a sn-glycerol 3-phosphate binding site. R16 contributes to the ADP binding site. 4 residues coordinate sn-glycerol 3-phosphate: R82, E83, Y134, and D241. R82, E83, Y134, D241, and Q242 together coordinate glycerol. Residues T263 and G306 each coordinate ADP. T263, G306, Q310, and G407 together coordinate ATP. G407 lines the ADP pocket.

Belongs to the FGGY kinase family.

It catalyses the reaction glycerol + ATP = sn-glycerol 3-phosphate + ADP + H(+). It functions in the pathway polyol metabolism; glycerol degradation via glycerol kinase pathway; sn-glycerol 3-phosphate from glycerol: step 1/1. Inhibited by fructose 1,6-bisphosphate (FBP). In terms of biological role, key enzyme in the regulation of glycerol uptake and metabolism. Catalyzes the phosphorylation of glycerol to yield sn-glycerol 3-phosphate. In Brachyspira hyodysenteriae (strain ATCC 49526 / WA1), this protein is Glycerol kinase.